A 244-amino-acid polypeptide reads, in one-letter code: rRNA adenine N-6-methyltransferase (244 aa).

Asparagine 11, isoleucine 13, glycine 38, glutamate 59, aspartate 84, and asparagine 101 together coordinate S-adenosyl-L-methionine.

Belongs to the class I-like SAM-binding methyltransferase superfamily. rRNA adenine N(6)-methyltransferase family.

It carries out the reaction adenosine(2085) in 23S rRNA + 2 S-adenosyl-L-methionine = N(6)-dimethyladenosine(2085) in 23S rRNA + 2 S-adenosyl-L-homocysteine + 2 H(+). Its function is as follows. This protein produces a dimethylation of the adenine residue at position 2085 in 23S rRNA, resulting in reduced affinity between ribosomes and macrolide-lincosamide-streptogramin B antibiotics. This is rRNA adenine N-6-methyltransferase (ermM) from Staphylococcus epidermidis.